A 311-amino-acid polypeptide reads, in one-letter code: Phosphoribosylaminoimidazole-succinocarboxamide synthase (311 aa).

It belongs to the SAICAR synthetase family.

It carries out the reaction 5-amino-1-(5-phospho-D-ribosyl)imidazole-4-carboxylate + L-aspartate + ATP = (2S)-2-[5-amino-1-(5-phospho-beta-D-ribosyl)imidazole-4-carboxamido]succinate + ADP + phosphate + 2 H(+). Its pathway is purine metabolism; IMP biosynthesis via de novo pathway; 5-amino-1-(5-phospho-D-ribosyl)imidazole-4-carboxamide from 5-amino-1-(5-phospho-D-ribosyl)imidazole-4-carboxylate: step 1/2. This is Phosphoribosylaminoimidazole-succinocarboxamide synthase from Azoarcus sp. (strain BH72).